The sequence spans 400 residues: Ribosomal RNA dihydrouridine synthase (400 aa).

Positions 14, 33, 34, 40, 46, 51, 131, 367, and 380 each coordinate FAD.

It belongs to the BaiN/RdsA family. RdsA subfamily. FAD is required as a cofactor.

It catalyses the reaction a 5,6-dihydrouridine in mRNA + NAD(+) = a uridine in mRNA + NADH + H(+). Functionally, catalyzes the synthesis of 5,6-dihydrouridine (D) at position 2449 in 23S rRNA. Can use NADH as a source of reducing equivalents but not NADPH. The chain is Ribosomal RNA dihydrouridine synthase from Escherichia coli (strain K12).